An 872-amino-acid chain; its full sequence is Protein SCD5 (872 aa).

2 disordered regions span residues M1 to D98 and P209 to Q239. The segment covering F48–N85 has biased composition (polar residues). Positions K272–F276 match the KKRVK motif; Required for interaction with GLC7, endocytosis and actin cytoskeleton organization motif. Disordered regions lie at residues I280 to T321 and S338 to L358. Composition is skewed to polar residues over residues D284 to S296 and G339 to Q348. Repeat copies occupy residues Q405–R424, Q439–R458, S479–K498, S534–Q545, S564–I575, P593–S604, S608–S619, S623–I634, S636–T647, S650–Q661, P683–Q694, and S717–S728. Residues Q405–T448 form a 3 X 20 AA approximate repeats region. A phosphothreonine; by PRK1 mark is found at T416 and T450. The segment at H460–A489 is disordered. The segment covering E462 to G481 has biased composition (polar residues). T490 carries the phosphothreonine; by PRK1 modification. 2 disordered regions span residues Q516–N571 and A591–Q620. The interval S534–S728 is 9 X 12 AA approximate repeats. S564 is modified (phosphoserine). A compositionally biased stretch (polar residues) spans P594 to Q620. The tract at residues I649–I681 is disordered. A compositionally biased stretch (low complexity) spans P651–Q663. Over residues L697–Q727 the composition is skewed to polar residues. Disordered regions lie at residues L697–F758 and N806–F838. Positions S728–T745 are enriched in low complexity. Composition is skewed to polar residues over residues V746–F758 and N806–K815. Residues Q823–Q835 are compositionally biased toward low complexity.

Interacts (via KKVRF motif) with phosphatase GLC7. Phosphorylation by PRK1 and/or AKL1 on Thr-416, Thr-450 and Thr-490 of repeats 1-1, 1-2 and/or 1-3 negatively regulates SCD5 function in endocytosis and actin cytoskeleton organization.

Its subcellular location is the membrane. In terms of biological role, regulates both fluid phase and receptor-mediated endocytosis. Involved in vesicular transport at a late stage of the secretory pathway. Regulates actin cytoskeleton organization. The polypeptide is Protein SCD5 (SCD5) (Saccharomyces cerevisiae (strain ATCC 204508 / S288c) (Baker's yeast)).